The following is a 348-amino-acid chain: Protein disulfide isomerase CRELD2 (348 aa).

The signal sequence occupies residues 1 to 22 (MHLPPAAAVGLLLLLLPPPARV). The CXXC signature appears at 30 to 33 (CQRC). 4 cysteine pairs are disulfide-bonded: Cys30–Cys33, Cys139–Cys153, Cys147–Cys165, and Cys167–Cys176. The region spanning 135-177 (DCQECQGGSQRPCSGNGHCDGDGSRQGDGSCQCHVGYKGPLCI) is the EGF-like 1 domain. The stretch at 192–239 (HSFCTACDESCKTCSGPTNKGCVECEVGWTRVEDACVDVDECAAETPP) is one FU 1 repeat. An N-linked (GlcNAc...) asparagine glycan is attached at Asn250. The stretch at 252 to 299 (SYTCEECDSTCVGCTGKGPANCKECISGYSKQKGECADIDECSLETKV) is one FU 2 repeat. The CXXC motif lies at 262–265 (CVGC). 4 disulfides stabilise this stretch: Cys262/Cys265, Cys293/Cys307, Cys300/Cys316, and Cys318/Cys328. One can recognise an EGF-like 2; calcium-binding domain in the interval 289–329 (DIDECSLETKVCKKENENCYNTPGSFVCVCPEGFEEDRRCL).

It belongs to the CRELD family. As to quaternary structure, interacts with CHRNA4. Component of a complex containing at least CRELD2, MANF, MATN3 and PDIA4.

Its subcellular location is the endoplasmic reticulum. The catalysed reaction is Catalyzes the rearrangement of -S-S- bonds in proteins.. Its function is as follows. Protein disulfide isomerase. Might play a role in the unfolded protein response. May regulate transport of alpha4-beta2 neuronal acetylcholine receptor. The sequence is that of Protein disulfide isomerase CRELD2 (CRELD2) from Cricetulus griseus (Chinese hamster).